The following is a 358-amino-acid chain: Heterogeneous nuclear ribonucleoprotein A2 homolog 2 (358 aa).

2 consecutive RRM domains span residues 9 to 92 (RKLF…ESAK) and 100 to 179 (KKLF…LSKQ). Disordered stretches follow at residues 182 to 217 (QDVQ…FRGG) and 333 to 358 (YGGG…RNRY). The segment covering 193-217 (GNFGFGDSRGGGNFGSGPGGNFRGG) has biased composition (gly residues). The tract at residues 309–352 (QQSSSYGPMKSGGNFGGNRSMGGPYGGGNYGPGNGSGASGGGGY) is nuclear targeting sequence.

Its subcellular location is the nucleus. Its function is as follows. Forms complexes (ribonucleosomes) with at least 20 other different hnRNP and heterogeneous nuclear RNA in the nucleus. The polypeptide is Heterogeneous nuclear ribonucleoprotein A2 homolog 2 (Xenopus laevis (African clawed frog)).